The following is an 847-amino-acid chain: Alanine--tRNA ligase (847 aa).

Positions 554, 558, 656, and 660 each coordinate Zn(2+).

It belongs to the class-II aminoacyl-tRNA synthetase family. It depends on Zn(2+) as a cofactor.

It localises to the cytoplasm. It carries out the reaction tRNA(Ala) + L-alanine + ATP = L-alanyl-tRNA(Ala) + AMP + diphosphate. Its function is as follows. Catalyzes the attachment of alanine to tRNA(Ala) in a two-step reaction: alanine is first activated by ATP to form Ala-AMP and then transferred to the acceptor end of tRNA(Ala). Also edits incorrectly charged Ser-tRNA(Ala) and Gly-tRNA(Ala) via its editing domain. This chain is Alanine--tRNA ligase, found in Helicobacter pylori (strain J99 / ATCC 700824) (Campylobacter pylori J99).